Consider the following 638-residue polypeptide: Chaperone protein DnaK (638 aa).

Threonine 198 bears the Phosphothreonine; by autocatalysis mark. The segment at 602-638 (QAKSQAQGGEEAQAKDAGQSNDDVVDAEFEEVKDDKK) is disordered. The span at 624–638 (DVVDAEFEEVKDDKK) shows a compositional bias: acidic residues.

It belongs to the heat shock protein 70 family.

In terms of biological role, acts as a chaperone. The protein is Chaperone protein DnaK of Shewanella denitrificans (strain OS217 / ATCC BAA-1090 / DSM 15013).